The chain runs to 63 residues: Large ribosomal subunit protein uL29 (63 aa).

Belongs to the universal ribosomal protein uL29 family.

The protein is Large ribosomal subunit protein uL29 of Actinobacillus succinogenes (strain ATCC 55618 / DSM 22257 / CCUG 43843 / 130Z).